A 404-amino-acid polypeptide reads, in one-letter code: Probable tRNA sulfurtransferase (404 aa).

The 106-residue stretch at 60-165 (TAVAESLKQV…EEAAYLSYET (106 aa)) folds into the THUMP domain. Residues 183 to 184 (ML), 208 to 209 (HF), R265, G287, and Q296 each bind ATP.

Belongs to the ThiI family.

The protein resides in the cytoplasm. It catalyses the reaction [ThiI sulfur-carrier protein]-S-sulfanyl-L-cysteine + a uridine in tRNA + 2 reduced [2Fe-2S]-[ferredoxin] + ATP + H(+) = [ThiI sulfur-carrier protein]-L-cysteine + a 4-thiouridine in tRNA + 2 oxidized [2Fe-2S]-[ferredoxin] + AMP + diphosphate. The enzyme catalyses [ThiS sulfur-carrier protein]-C-terminal Gly-Gly-AMP + S-sulfanyl-L-cysteinyl-[cysteine desulfurase] + AH2 = [ThiS sulfur-carrier protein]-C-terminal-Gly-aminoethanethioate + L-cysteinyl-[cysteine desulfurase] + A + AMP + 2 H(+). Its pathway is cofactor biosynthesis; thiamine diphosphate biosynthesis. Functionally, catalyzes the ATP-dependent transfer of a sulfur to tRNA to produce 4-thiouridine in position 8 of tRNAs, which functions as a near-UV photosensor. Also catalyzes the transfer of sulfur to the sulfur carrier protein ThiS, forming ThiS-thiocarboxylate. This is a step in the synthesis of thiazole, in the thiamine biosynthesis pathway. The sulfur is donated as persulfide by IscS. The sequence is that of Probable tRNA sulfurtransferase from Streptococcus pneumoniae (strain ATCC 700669 / Spain 23F-1).